Reading from the N-terminus, the 344-residue chain is MASGKIIKLVVFELLEFAAFSIPTLVIMEQFATANQRTKSERTHYWLIVSCSIAYVAVVSLLIWVPVKVVLYKKRHLYKKIIGWRPVLVMCVVLTTLPSFSFSIAVTEVQKNINGSANSLPESLPDLPVSLVLLSLIVVDIIEKLRQYPLRGSQKGYEDNDICITSLQQIKTVTEQVVQSDGNPASAQAAKPTAMSQPRNHVAVLAGPLEPSFQSRILRTMSQRDVRAELFLRSFLMWADTVEMLRVAGHQAVYKSAWLYPVYIFSFISLLRMVFTPKNPLLNSLGILMQDLPFVFLRLSLILALGTITPVLGLCKNVLVTISYIYFNYVTKLRPFSAFETSPF.

3 consecutive transmembrane segments (helical) span residues 9–29 (LVVFELLEFAAFSIPTLVIME), 47–67 (LIVSCSIAYVAVVSLLIWVPV), and 86–106 (PVLVMCVVLTTLPSFSFSIAV). Asn114 is a glycosylation site (N-linked (GlcNAc...) asparagine). A run of 3 helical transmembrane segments spans residues 122–142 (ESLPDLPVSLVLLSLIVVDII), 257–277 (AWLYPVYIFSFISLLRMVFTP), and 294–314 (FVFLRLSLILALGTITPVLGL).

Belongs to the TMEM236 family.

Its subcellular location is the membrane. This Mus musculus (Mouse) protein is Transmembrane protein 236 (Tmem236).